Here is a 145-residue protein sequence, read N- to C-terminus: D-aminoacyl-tRNA deacylase (145 aa).

A Gly-cisPro motif, important for rejection of L-amino acids motif is present at residues 137-138 (GP).

Belongs to the DTD family. In terms of assembly, homodimer.

The protein resides in the cytoplasm. The enzyme catalyses glycyl-tRNA(Ala) + H2O = tRNA(Ala) + glycine + H(+). It carries out the reaction a D-aminoacyl-tRNA + H2O = a tRNA + a D-alpha-amino acid + H(+). An aminoacyl-tRNA editing enzyme that deacylates mischarged D-aminoacyl-tRNAs. Also deacylates mischarged glycyl-tRNA(Ala), protecting cells against glycine mischarging by AlaRS. Acts via tRNA-based rather than protein-based catalysis; rejects L-amino acids rather than detecting D-amino acids in the active site. By recycling D-aminoacyl-tRNA to D-amino acids and free tRNA molecules, this enzyme counteracts the toxicity associated with the formation of D-aminoacyl-tRNA entities in vivo and helps enforce protein L-homochirality. The sequence is that of D-aminoacyl-tRNA deacylase from Pseudomonas fluorescens (strain SBW25).